The primary structure comprises 540 residues: 2-isopropylmalate synthase (540 aa).

The Pyruvate carboxyltransferase domain maps to 8–271 (VLIFDTTLRD…NPFFGREEDS (264 aa)). The Mn(2+) site is built by Asp-17, His-208, His-210, and Asn-244. A regulatory domain region spans residues 408–540 (QLKLVQVSCG…PVVLESRPTL (133 aa)).

It belongs to the alpha-IPM synthase/homocitrate synthase family. LeuA type 1 subfamily. As to quaternary structure, homodimer. It depends on Mn(2+) as a cofactor.

The protein resides in the cytoplasm. It catalyses the reaction 3-methyl-2-oxobutanoate + acetyl-CoA + H2O = (2S)-2-isopropylmalate + CoA + H(+). It functions in the pathway amino-acid biosynthesis; L-leucine biosynthesis; L-leucine from 3-methyl-2-oxobutanoate: step 1/4. Functionally, catalyzes the condensation of the acetyl group of acetyl-CoA with 3-methyl-2-oxobutanoate (2-ketoisovalerate) to form 3-carboxy-3-hydroxy-4-methylpentanoate (2-isopropylmalate). This Synechococcus sp. (strain CC9605) protein is 2-isopropylmalate synthase.